Consider the following 158-residue polypeptide: Transcription elongation factor GreA (158 aa).

Residues 10–75 (TKEGKEKLEQ…QMLENMIRNA (66 aa)) are a coiled coil.

This sequence belongs to the GreA/GreB family.

Necessary for efficient RNA polymerase transcription elongation past template-encoded arresting sites. The arresting sites in DNA have the property of trapping a certain fraction of elongating RNA polymerases that pass through, resulting in locked ternary complexes. Cleavage of the nascent transcript by cleavage factors such as GreA or GreB allows the resumption of elongation from the new 3'terminus. GreA releases sequences of 2 to 3 nucleotides. The protein is Transcription elongation factor GreA of Geobacillus kaustophilus (strain HTA426).